The chain runs to 436 residues: Trigger factor (436 aa).

The PPIase FKBP-type domain occupies 161 to 246 (DDRVTVDFVG…VNKVEGLSLP (86 aa)).

It belongs to the FKBP-type PPIase family. Tig subfamily.

Its subcellular location is the cytoplasm. The enzyme catalyses [protein]-peptidylproline (omega=180) = [protein]-peptidylproline (omega=0). Involved in protein export. Acts as a chaperone by maintaining the newly synthesized protein in an open conformation. Functions as a peptidyl-prolyl cis-trans isomerase. The chain is Trigger factor from Pseudoalteromonas atlantica (strain T6c / ATCC BAA-1087).